Consider the following 230-residue polypeptide: TPR repeat-containing protein BB_0298 (230 aa).

TPR repeat units follow at residues 69–102 (ARFF…NPNN) and 183–216 (FEFL…ASTE).

The polypeptide is TPR repeat-containing protein BB_0298 (Borreliella burgdorferi (strain ATCC 35210 / DSM 4680 / CIP 102532 / B31) (Borrelia burgdorferi)).